Reading from the N-terminus, the 456-residue chain is GTP cyclohydrolase 1 (456 aa).

Residues Cys-340, His-343, and Cys-412 each coordinate Zn(2+).

The protein belongs to the GTP cyclohydrolase I family. As to quaternary structure, homodimer. As to expression, expressed in leaves and unripe fruits.

It catalyses the reaction GTP + H2O = 7,8-dihydroneopterin 3'-triphosphate + formate + H(+). Its pathway is cofactor biosynthesis; 7,8-dihydroneopterin triphosphate biosynthesis; 7,8-dihydroneopterin triphosphate from GTP: step 1/1. Its function is as follows. GTP cyclohydrolase 1 is the first enzyme in the biosynthetic pathway leading to folic acid. The sequence is that of GTP cyclohydrolase 1 (GCH1) from Solanum lycopersicum (Tomato).